A 115-amino-acid polypeptide reads, in one-letter code: uncharacterized protein (115 aa).

The Cytoplasmic segment spans residues 1–11; it reads MKLTKEKKNDC. The chain crosses the membrane as a helical span at residues 12–32; it reads LVGVSYIPPLNFFTLTFLFLL. Over 33–52 the chain is Extracellular; sequence RIEKVHLSLSLSLSLSLRFY. A helical membrane pass occupies residues 53–73; the sequence is YFHNVCYPSLFLFFCFVIPFF. Topologically, residues 74 to 78 are cytoplasmic; the sequence is YSVRF. A helical membrane pass occupies residues 79–98; the sequence is ILLYLHILRSFYELNILLLY. Over 99–115 the chain is Extracellular; the sequence is GAENSRRQSPPGYYVIR.

The protein resides in the membrane. This is an uncharacterized protein from Saccharomyces cerevisiae (strain ATCC 204508 / S288c) (Baker's yeast).